The sequence spans 526 residues: Tyrosine-protein kinase transforming protein Src (526 aa).

Residues 1 to 15 (MGSSKSKPKGPSQRR) are compositionally biased toward basic residues. Residues 1 to 59 (MGSSKSKPKGPSQRRRSLEPPDSTHHGGFPASQTPNKTAAPDTHRTPSRSFGTVATEPK) are disordered. Gly-2 carries the N-myristoyl glycine; by host lipid modification. Over residues 16–25 (RSLEPPDSTH) the composition is skewed to basic and acidic residues. In terms of domain architecture, SH3 spans 81–142 (GGVTTFVALY…PSNYVAPSDS (62 aa)). Residues 148-245 (WYFGKITRRE…GLCHRLTNVC (98 aa)) enclose the SH2 domain. The Protein kinase domain maps to 267 to 517 (LRLEVKLGQG…TFEYLQAQLL (251 aa)). ATP-binding positions include 273–281 (LGQGCFGEV) and Lys-295. Catalysis depends on Asp-386, which acts as the Proton acceptor. Position 416 is a phosphotyrosine; by autocatalysis (Tyr-416).

Belongs to the protein kinase superfamily. Tyr protein kinase family. SRC subfamily. Homodimer. Post-translationally, the phosphorylated form is termed pp60v-src.

The enzyme catalyses L-tyrosyl-[protein] + ATP = O-phospho-L-tyrosyl-[protein] + ADP + H(+). Its function is as follows. This phosphoprotein, required for both the initiation and the maintenance of neoplastic transformation, is a protein kinase that catalyzes the phosphorylation of tyrosine residues in vitro. This Rous sarcoma virus subgroup E (strain Schmidt-Ruppin) (RSV-SR-E) protein is Tyrosine-protein kinase transforming protein Src (V-SRC).